Consider the following 695-residue polypeptide: Nucleoprotein (695 aa).

Coiled coils occupy residues 316–341 and 372–399; these read VNVGEQYQQLREAAHDAEVKLQRRHE and QTLAVLSQKREKLARLAAEIENNIVEDQ. The tract at residues 424–611 is disordered; that stretch reads QARPMNRPTA…SPSAPQEDTR (188 aa). The segment covering 438-447 has biased composition (basic and acidic residues); it reads VDDKIEHEST. Polar residues-rich tracts occupy residues 495-505 and 537-552; these read RQSQDLNNSQG and TTDSQESIDQPGSDNE. A PTAP/PSAP motif motif is present at residues 603-606; the sequence is PSAP.

Belongs to the filoviruses nucleoprotein family. As to quaternary structure, homooligomer. Homomultimerizes to form the nucleocapsid. Binds to viral genomic RNA. Interacts with VP35 and VP30 to form the nucleocapsid. Also interacts with VP24 and VP40. Post-translationally, phosphorylated.

It is found in the virion. The protein localises to the host cytoplasm. Its function is as follows. Encapsidates the genome, protecting it from nucleases. The encapsidated genomic RNA is termed the nucleocapsid and serves as template for transcription and replication. During replication, encapsidation by NP is coupled to RNA synthesis and all replicative products are resistant to nucleases. The protein is Nucleoprotein (NP) of Chlorocebus aethiops (Green monkey).